Here is a 205-residue protein sequence, read N- to C-terminus: Adenylyl-sulfate kinase (205 aa).

Gly-35 to Ser-42 serves as a coordination point for ATP. The Phosphoserine intermediate role is filled by Ser-109.

The protein belongs to the APS kinase family.

The catalysed reaction is adenosine 5'-phosphosulfate + ATP = 3'-phosphoadenylyl sulfate + ADP + H(+). Its pathway is sulfur metabolism; hydrogen sulfide biosynthesis; sulfite from sulfate: step 2/3. In terms of biological role, catalyzes the synthesis of activated sulfate. The chain is Adenylyl-sulfate kinase from Acaryochloris marina (strain MBIC 11017).